The primary structure comprises 126 residues: Holo-[acyl-carrier-protein] synthase (126 aa).

Positions 8 and 57 each coordinate Mg(2+).

The protein belongs to the P-Pant transferase superfamily. AcpS family. Requires Mg(2+) as cofactor.

It localises to the cytoplasm. It catalyses the reaction apo-[ACP] + CoA = holo-[ACP] + adenosine 3',5'-bisphosphate + H(+). In terms of biological role, transfers the 4'-phosphopantetheine moiety from coenzyme A to a Ser of acyl-carrier-protein. In Halorhodospira halophila (strain DSM 244 / SL1) (Ectothiorhodospira halophila (strain DSM 244 / SL1)), this protein is Holo-[acyl-carrier-protein] synthase.